A 2190-amino-acid polypeptide reads, in one-letter code: Voltage-dependent L-type calcium channel subunit alpha-1D (2190 aa).

The segment covering 1–10 (MQHHQQQQPE) has biased composition (low complexity). Disordered regions lie at residues 1–44 (MQHH…SKQT) and 57–96 (QAKA…SNSR). Topologically, residues 1-121 (MQHHQQQQPE…RACISLVEWK (121 aa)) are cytoplasmic. 2 stretches are compositionally biased toward polar residues: residues 31–44 (PTTQ…SKQT) and 63–76 (NMNT…GSLS). Positions 77–88 (QRKRQQYAKSKK) are enriched in basic residues. The I repeat unit spans residues 108–404 (NPIRRACISL…LVLGVLSGEF (297 aa)). A helical membrane pass occupies residues 122–140 (PFDIFILLSIFANCVALAV). Over 141-158 (YIPFPEDDSNSTNHNLEK) the chain is Extracellular. Residue Asn-150 is glycosylated (N-linked (GlcNAc...) asparagine). Residues 159–178 (VEYAFLIIFTVETFLKIIAY) traverse the membrane as a helical segment. At 179–190 (GLLLHPNAYVRN) the chain is on the cytoplasmic side. The chain crosses the membrane as a helical span at residues 191-209 (GWNLLDFVIVVVGLFSVIL). The Extracellular segment spans residues 210–230 (EQLTKETEGGSHSGGKPGGFD). A helical membrane pass occupies residues 231–249 (VKALRAFRVLRPLRLVSGV). Over 250–268 (PSLQVVLNSIIKAMVPLLH) the chain is Cytoplasmic. A helical transmembrane segment spans residues 269–288 (IALLVLFVIIIYAIIGLELF). The Extracellular portion of the chain corresponds to 289–376 (IGKMHKSCFL…WVNDAIGCEW (88 aa)). N-linked (GlcNAc...) asparagine glycosylation is present at Asn-324. Glu-359 lines the Ca(2+) pocket. Residues 377–401 (PWIYFVSLIILGSFFVLNLVLGVLS) form a helical membrane-spanning segment. Residues 402–544 (GEFSKEREKA…RKCRAAVKSV (143 aa)) are Cytoplasmic-facing. The interval 424 to 441 (QQLEEDLKGYLDWITQAE) is binding to the beta subunit. The tract at residues 478 to 500 (GRSSNKHASMPTSETESVNTENV) is disordered. Residues 530-776 (NRFNRRKCRA…VFLAIAVDNL (247 aa)) form an II repeat. The helical transmembrane segment at 545–564 (TFYWLVIVLVFLNTLTISSE) threads the bilayer. Residues 565–579 (HYNQPDWLTQIQDIA) are Extracellular-facing. Residues 580–598 (NKVLLALFTCEMLVKMYSL) form a helical membrane-spanning segment. Topologically, residues 599–606 (GLQAYFVS) are cytoplasmic. Residues 607–625 (LFNRFDCFVVCGGIVETIL) form a helical membrane-spanning segment. Residues 626 to 635 (VELEIMSPLG) lie on the Extracellular side of the membrane. Residues 636–654 (ISVFRCVRLLRIFKVTRHW) traverse the membrane as a helical segment. Topologically, residues 655–673 (ASLSNLVASLLNSMKSIAS) are cytoplasmic. The chain crosses the membrane as a helical span at residues 674 to 694 (LLLLLFLFIIIFSLLGMQLFG). At 695–748 (GKFNFDETQTKRSTFDNFPQALLTVFQILTGEDWNAVMYDGIMAYGGPSSSGMI) the chain is on the extracellular side. Ca(2+) is bound at residue Glu-726. Residues 749-773 (VCIYFIILFICGNYILLNVFLAIAV) traverse the membrane as a helical segment. The Cytoplasmic portion of the chain corresponds to 774-907 (DNLADAESLN…VGCHRLINHH (134 aa)). The span at 787 to 823 (KEEAEEKERKKNARKESLENKKSEKSEGDQKKPKDSK) shows a compositional bias: basic and acidic residues. The interval 787-869 (KEEAEEKERK…VPAGPRPRRI (83 aa)) is disordered. Over residues 847-859 (VGEDEEDEEDEPE) the composition is skewed to acidic residues. Residues 894-1176 (NPIRVGCHRL…IFVGFVIVTF (283 aa)) form an III repeat. A helical membrane pass occupies residues 908 to 926 (IFTNLILVFIMLSSVSLAA). Topologically, residues 927-942 (EDPIRSHSFRNNILGY) are extracellular. A helical transmembrane segment spans residues 943–962 (ADYVFTSMFTFEIILKMTAF). The Cytoplasmic segment spans residues 963-974 (GAFLHKGSFCRN). Residues 975-993 (YFNLLDLLVVGVSLVSFGI) form a helical membrane-spanning segment. The Extracellular portion of the chain corresponds to 994-999 (QSSAIS). The chain crosses the membrane as a helical span at residues 1000-1019 (VVKILRVLRVLRPLRAINRA). The Cytoplasmic portion of the chain corresponds to 1020-1038 (KGLKHVVQCVFVAIRTIGN). Residues 1039–1058 (IMIVTTLLQFMFACIGVQLF) form a helical membrane-spanning segment. Residues 1059-1148 (KGKFYKCTDE…VGPVYNYRVE (90 aa)) are Extracellular-facing. The interval 1096–1186 (RVWQNSDFNF…QEQGEQEYKN (91 aa)) is dihydropyridine binding. Residue Glu-1122 participates in Ca(2+) binding. Residues 1149–1169 (ISIFFIIYIIIIAFFMMNIFV) form a helical membrane-spanning segment. At 1170 to 1226 (GFVIVTFQEQGEQEYKNCELDKNQRQCVEYALKARPLRRYIPKNPYQYKFWYVVNST) the chain is on the cytoplasmic side. An IV repeat occupies 1213–1496 (NPYQYKFWYV…LFVAVIMDNF (284 aa)). Residues 1227-1245 (GFEYIMFVLIMLNTLCLAM) traverse the membrane as a helical segment. The Extracellular segment spans residues 1246 to 1260 (QHYGQSKLFNDAMDI). The helical transmembrane segment at 1261–1280 (MNMVFTGVFTVEMVLKLIAF) threads the bilayer. The Cytoplasmic segment spans residues 1281–1297 (KPKIFVRKKERWLGYFS). Residues 1298 to 1319 (DAWNTFDSLIVIGSIVDVVLSE) traverse the membrane as a helical segment. Residues 1320 to 1342 (ADPKPTETVTTDESGNSEDSARI) are Extracellular-facing. A helical membrane pass occupies residues 1343–1362 (SITFFRLFRVMRLVKLLSRG). Over 1363-1381 (EGIRTLLWTFIKSFQALPY) the chain is Cytoplasmic. The chain crosses the membrane as a helical span at residues 1382–1401 (VALLIAMLFFIYAVIGMQVF). The Extracellular portion of the chain corresponds to 1402–1468 (GKVAMRDNNQ…GEEYTCGSNF (67 aa)). The interval 1449–1515 (RCDPESDYNP…LGPHHLDEFK (67 aa)) is dihydropyridine binding. A phenylalkylamine binding region spans residues 1461–1504 (EYTCGSNFAIIYFISFYMLCAFLIINLFVAVIMDNFDYLTRDWS). Residues 1469–1493 (AIIYFISFYMLCAFLIINLFVAVIM) traverse the membrane as a helical segment. At 1494 to 2190 (DNFDYLTRDW…ADEMICITSL (697 aa)) the chain is on the cytoplasmic side. Disordered regions lie at residues 1736–1787 (THRP…NANL), 1803–1833 (FGSH…SRRT), 1917–1952 (HGFF…RSSF), and 1995–2025 (SSKA…HTPY). Basic and acidic residues predominate over residues 1805 to 1823 (SHEHRSENGYHSYSRADHE). Residues 1824–1833 (KRRRPSSRRT) show a composition bias toward basic residues.

It belongs to the calcium channel alpha-1 subunit (TC 1.A.1.11) family. CACNA1D subfamily. In terms of assembly, voltage-dependent calcium channels are multisubunit complexes, consisting of alpha-1, alpha-2, beta and delta subunits in a 1:1:1:1 ratio. The channel activity is directed by the pore-forming and voltage-sensitive alpha-1 subunit. In many cases, this subunit is sufficient to generate voltage-sensitive calcium channel activity. The auxiliary subunits beta and alpha-2/delta linked by a disulfide bridge regulate the channel activity. Interacts with RIMBP2. In terms of tissue distribution, expressed in the basilar papilla of the cochlea.

The protein resides in the membrane. The enzyme catalyses Ca(2+)(in) = Ca(2+)(out). Functionally, the isoform alpha-1D gives rise to L-type calcium currents. Long-lasting (L-type) calcium channels belong to the 'high-voltage activated' (HVA) group. The chain is Voltage-dependent L-type calcium channel subunit alpha-1D (CACNA1D) from Gallus gallus (Chicken).